The chain runs to 122 residues: Large ribosomal subunit protein uL18 (122 aa).

Residues 1–20 (MFKKVSKNANRLSRHQRVRN) are disordered.

The protein belongs to the universal ribosomal protein uL18 family. Part of the 50S ribosomal subunit; part of the 5S rRNA/L5/L18/L25 subcomplex. Contacts the 5S and 23S rRNAs.

This is one of the proteins that bind and probably mediate the attachment of the 5S RNA into the large ribosomal subunit, where it forms part of the central protuberance. This is Large ribosomal subunit protein uL18 from Alkaliphilus oremlandii (strain OhILAs) (Clostridium oremlandii (strain OhILAs)).